A 121-amino-acid chain; its full sequence is Small ribosomal subunit protein uS13 (121 aa).

Residues 94–121 form a disordered region; sequence GLPMRGQRTRTNARTRKGPRKGAAALKK.

This sequence belongs to the universal ribosomal protein uS13 family. Part of the 30S ribosomal subunit. Forms a loose heterodimer with protein S19. Forms two bridges to the 50S subunit in the 70S ribosome.

Its function is as follows. Located at the top of the head of the 30S subunit, it contacts several helices of the 16S rRNA. In the 70S ribosome it contacts the 23S rRNA (bridge B1a) and protein L5 of the 50S subunit (bridge B1b), connecting the 2 subunits; these bridges are implicated in subunit movement. Contacts the tRNAs in the A and P-sites. The chain is Small ribosomal subunit protein uS13 from Delftia acidovorans (strain DSM 14801 / SPH-1).